The chain runs to 179 residues: Pyridoxal 5'-phosphate synthase subunit PdxT (179 aa).

48–50 lines the L-glutamine pocket; sequence GES. The active-site Nucleophile is cysteine 79. L-glutamine is bound by residues arginine 101 and 127–128; that span reads IR. Active-site charge relay system residues include histidine 163 and glutamate 165.

This sequence belongs to the glutaminase PdxT/SNO family. In terms of assembly, in the presence of PdxS, forms a dodecamer of heterodimers. Only shows activity in the heterodimer.

It catalyses the reaction aldehydo-D-ribose 5-phosphate + D-glyceraldehyde 3-phosphate + L-glutamine = pyridoxal 5'-phosphate + L-glutamate + phosphate + 3 H2O + H(+). The enzyme catalyses L-glutamine + H2O = L-glutamate + NH4(+). It participates in cofactor biosynthesis; pyridoxal 5'-phosphate biosynthesis. In terms of biological role, catalyzes the hydrolysis of glutamine to glutamate and ammonia as part of the biosynthesis of pyridoxal 5'-phosphate. The resulting ammonia molecule is channeled to the active site of PdxS. This Francisella tularensis subsp. novicida (strain U112) protein is Pyridoxal 5'-phosphate synthase subunit PdxT.